Reading from the N-terminus, the 340-residue chain is DNA repair protein RAD51 homolog B (340 aa).

The interval 1 to 22 (MSSSSAHQKASPPIEEEATEHG) is disordered. Residues 49-78 (TVESVAYSPRKDLLQIKGISEAKVDKIIEA) form the HhH domain. 128–135 (GEFRSGKT) provides a ligand contact to ATP.

Belongs to the RecA family. RAD51 subfamily. Self-associates and may interact with XRCC3 homolog. As to expression, highly expressed in mitotic and meiotic tissues, but low levels in differentiated tissues.

The protein localises to the nucleus. Binds to single and double-stranded DNA and exhibits DNA-dependent ATPase activity. Unwinds duplex DNA. Component of the meiotic recombination pathway. Seems to play a role in mediating chromosome homology search, chromosome pairing and synapsis at early stages and probably chromosome crossing-over at later stages in meiosis. Probably is involved in the repair of meiotic double strand breaks (DBSs) and in homologous recombination. This Zea mays (Maize) protein is DNA repair protein RAD51 homolog B (RAD51B).